The following is a 202-amino-acid chain: MSKESYELKAEARERVGKGSSRELRRNGLIPAVIYGDKQAPISIALSTNEVTKRIHAGGFMTTVGTIDVDGKKIKVLPKDYQLDPVRDFTMHVDFLRVSGNTLVNVEIPVHFENEEKSDIKIGGVLNIVRHTVEFHCPANDIPEAITVDLSGLKIGDSVHISNVKLPKNITPVIADRDFTIATIVAPAAGVEEETTEEASEE.

Positions 1 to 21 (MSKESYELKAEARERVGKGSS) are disordered.

The protein belongs to the bacterial ribosomal protein bL25 family. CTC subfamily. In terms of assembly, part of the 50S ribosomal subunit; part of the 5S rRNA/L5/L18/L25 subcomplex. Contacts the 5S rRNA. Binds to the 5S rRNA independently of L5 and L18.

In terms of biological role, this is one of the proteins that binds to the 5S RNA in the ribosome where it forms part of the central protuberance. This is Large ribosomal subunit protein bL25 from Agrobacterium fabrum (strain C58 / ATCC 33970) (Agrobacterium tumefaciens (strain C58)).